The following is a 204-amino-acid chain: HTH-type transcriptional activator BcrR (204 aa).

Over 1–81 (MEFNEKLQQL…ETENRSNLKK (81 aa)) the chain is Cytoplasmic. One can recognise an HTH cro/C1-type domain in the interval 7–61 (LQQLRTGKNLTQEQLAEQLYVSRTAISKWESGKGYPNMESLKCISKFFSVTIDEL). Positions 18–37 (QEQLAEQLYVSRTAISKWES) form a DNA-binding region, H-T-H motif. A helical membrane pass occupies residues 82–102 (IYNYIYGILDMMAVAFIFLPL). Over 103–126 (YGNSVGGYVYAVNLLSFTATTPFN) the chain is Extracellular. Residues 127–147 (LAVYWSAFAALIIIGIGKIIS) form a helical membrane-spanning segment. At 148 to 154 (THLDKEK) the chain is on the cytoplasmic side. Residues 155–175 (WGGIATKCSLTITALAVCFFA) traverse the membrane as a helical segment. The Extracellular portion of the chain corresponds to 176–181 (AAREPY). The helical transmembrane segment at 182-202 (ITVLVFLLLIGKIFVWIKQMG) threads the bilayer. The Cytoplasmic segment spans residues 203–204 (MK).

Its subcellular location is the cell membrane. Constitutively bound to the bcrABD promoter. Requires bacitracin for activation, probably through a conformational change, such as the oligomerization of inactive dimers to form active tetramers. Functions both as a membrane-bound sensor and a transducer of bacitracin availability to activate transcription of the bcrABD operon in the presence of bacitracin. Binds specifically to two inverted repeat sequences on the bcrABD promoter, irrespective of bacitracin concentration. This Enterococcus faecalis (Streptococcus faecalis) protein is HTH-type transcriptional activator BcrR.